The sequence spans 360 residues: NAD(P)H-quinone oxidoreductase subunit 1, chloroplastic (360 aa).

The next 8 helical transmembrane spans lie at 27–47 (VWIF…VLVI), 98–118 (FSIG…VIPF), 129–149 (IGIF…LMSG), 165–185 (AAQS…ISLL), 203–223 (FWGW…ISSL), 253–273 (FGLF…FVTI), 297–317 (VFGT…VLVI), and 340–360 (FLLP…LLSL).

The protein belongs to the complex I subunit 1 family. In terms of assembly, NDH is composed of at least 16 different subunits, 5 of which are encoded in the nucleus.

The protein resides in the plastid. Its subcellular location is the chloroplast thylakoid membrane. It catalyses the reaction a plastoquinone + NADH + (n+1) H(+)(in) = a plastoquinol + NAD(+) + n H(+)(out). The enzyme catalyses a plastoquinone + NADPH + (n+1) H(+)(in) = a plastoquinol + NADP(+) + n H(+)(out). In terms of biological role, NDH shuttles electrons from NAD(P)H:plastoquinone, via FMN and iron-sulfur (Fe-S) centers, to quinones in the photosynthetic chain and possibly in a chloroplast respiratory chain. The immediate electron acceptor for the enzyme in this species is believed to be plastoquinone. Couples the redox reaction to proton translocation, and thus conserves the redox energy in a proton gradient. The sequence is that of NAD(P)H-quinone oxidoreductase subunit 1, chloroplastic from Draba nemorosa (Woodland whitlowgrass).